A 186-amino-acid polypeptide reads, in one-letter code: Probable chorismate pyruvate-lyase (186 aa).

Substrate contacts are provided by Arg-78, Leu-116, and Glu-175.

This sequence belongs to the UbiC family.

It is found in the cytoplasm. It carries out the reaction chorismate = 4-hydroxybenzoate + pyruvate. It functions in the pathway cofactor biosynthesis; ubiquinone biosynthesis. Its function is as follows. Removes the pyruvyl group from chorismate, with concomitant aromatization of the ring, to provide 4-hydroxybenzoate (4HB) for the ubiquinone pathway. In Psychromonas ingrahamii (strain DSM 17664 / CCUG 51855 / 37), this protein is Probable chorismate pyruvate-lyase.